The following is a 446-amino-acid chain: Tubulin gamma chain (446 aa).

142–148 (AGGTGSG) contacts GTP.

The protein belongs to the tubulin family. In terms of assembly, interacts with mto1. Interacts with mto2.

It localises to the cytoplasm. The protein resides in the cytoskeleton. The protein localises to the microtubule organizing center. It is found in the spindle pole body. Its function is as follows. Tubulin is the major constituent of microtubules. The gamma chain is found at microtubule organizing centers (MTOC) such as the spindle poles or the centrosome, suggesting that it is involved in the minus-end nucleation of microtubule assembly. The sequence is that of Tubulin gamma chain from Schizosaccharomyces pombe (strain 972 / ATCC 24843) (Fission yeast).